We begin with the raw amino-acid sequence, 236 residues long: Movement and silencing protein TGBp1 (236 aa).

Residues 1-117 (MDSEIVERLT…EPTARAHYTC (117 aa)) form the (+)RNA virus helicase ATP-binding domain. The region spanning 118–236 (NRTHRLGQLT…LYTAHFAPSA (119 aa)) is the (+)RNA virus helicase C-terminal domain.

The protein belongs to the Tymovirales TGBp1 protein family. In terms of assembly, homodimer and homooligomer. Interacts with capsid protein. Interacts with host AGO1; this interaction targets the host protein for degradation, thereby suppressing the antiviral RNA silencing.

It localises to the host cytoplasm. In terms of biological role, transports viral genome to neighboring plant cells directly through plasmosdesmata, without any budding. The movement protein allows efficient cell to cell propagation, by bypassing the host cell wall barrier. Increases plasmodesma size exclusion limit. Acts as a suppressor of RNA-mediated gene silencing, also known as post-transcriptional gene silencing (PTGS), a mechanism of plant viral defense that limits the accumulation of viral RNAs. The polypeptide is Movement and silencing protein TGBp1 (Setaria italica (Foxtail millet)).